The primary structure comprises 214 residues: ATP-dependent Clp protease proteolytic subunit (214 aa).

Ser106 serves as the catalytic Nucleophile. His131 is an active-site residue.

This sequence belongs to the peptidase S14 family. As to quaternary structure, fourteen ClpP subunits assemble into 2 heptameric rings which stack back to back to give a disk-like structure with a central cavity, resembling the structure of eukaryotic proteasomes.

The protein localises to the cytoplasm. It catalyses the reaction Hydrolysis of proteins to small peptides in the presence of ATP and magnesium. alpha-casein is the usual test substrate. In the absence of ATP, only oligopeptides shorter than five residues are hydrolyzed (such as succinyl-Leu-Tyr-|-NHMec, and Leu-Tyr-Leu-|-Tyr-Trp, in which cleavage of the -Tyr-|-Leu- and -Tyr-|-Trp bonds also occurs).. Cleaves peptides in various proteins in a process that requires ATP hydrolysis. Has a chymotrypsin-like activity. Plays a major role in the degradation of misfolded proteins. The protein is ATP-dependent Clp protease proteolytic subunit of Rhodopseudomonas palustris (strain BisB5).